A 248-amino-acid polypeptide reads, in one-letter code: 2,3-bisphosphoglycerate-dependent phosphoglycerate mutase (248 aa).

Substrate-binding positions include 8-15 (RHGESEWN), 21-22 (TG), R60, 87-90 (ERHY), K98, 114-115 (RR), and 183-184 (GN). The active-site Tele-phosphohistidine intermediate is the H9. The active-site Proton donor/acceptor is E87.

This sequence belongs to the phosphoglycerate mutase family. BPG-dependent PGAM subfamily.

The enzyme catalyses (2R)-2-phosphoglycerate = (2R)-3-phosphoglycerate. It functions in the pathway carbohydrate degradation; glycolysis; pyruvate from D-glyceraldehyde 3-phosphate: step 3/5. Functionally, catalyzes the interconversion of 2-phosphoglycerate and 3-phosphoglycerate. This is 2,3-bisphosphoglycerate-dependent phosphoglycerate mutase from Borrelia garinii subsp. bavariensis (strain ATCC BAA-2496 / DSM 23469 / PBi) (Borreliella bavariensis).